A 246-amino-acid chain; its full sequence is Uridylate kinase (246 aa).

Position 13 to 16 (13 to 16) interacts with ATP; sequence KLSG. G54 lines the UMP pocket. Positions 55 and 59 each coordinate ATP. Residues D74 and 135 to 142 each bind UMP; that span reads AGMPYFST. Residues N163, Y169, and D172 each coordinate ATP.

The protein belongs to the UMP kinase family. Homohexamer.

The protein localises to the cytoplasm. It catalyses the reaction UMP + ATP = UDP + ADP. The protein operates within pyrimidine metabolism; CTP biosynthesis via de novo pathway; UDP from UMP (UMPK route): step 1/1. Inhibited by UTP. In terms of biological role, catalyzes the reversible phosphorylation of UMP to UDP. The protein is Uridylate kinase of Bifidobacterium longum (strain NCC 2705).